A 985-amino-acid polypeptide reads, in one-letter code: Probable beta-galactosidase C (985 aa).

An N-terminal signal peptide occupies residues 1–23 (MRILSLLFLLLLGFLAGNRVVSA). The substrate site is built by Tyr82, Asn127, Ala128, Glu129, and Asn187. Catalysis depends on Glu188, which acts as the Proton donor. Tyr251 lines the substrate pocket. A disulfide bridge connects residues Cys257 and Cys304. A glycan (N-linked (GlcNAc...) asparagine) is linked at Asn276. Glu287 acts as the Nucleophile in catalysis. Residue Tyr353 participates in substrate binding. Residues Asn391, Asn434, Asn517, Asn602, Asn677, Asn715, Asn720, and Asn759 are each glycosylated (N-linked (GlcNAc...) asparagine).

The protein belongs to the glycosyl hydrolase 35 family.

The protein localises to the secreted. It carries out the reaction Hydrolysis of terminal non-reducing beta-D-galactose residues in beta-D-galactosides.. In terms of biological role, cleaves beta-linked terminal galactosyl residues from gangliosides, glycoproteins, and glycosaminoglycans. The protein is Probable beta-galactosidase C (lacC) of Aspergillus clavatus (strain ATCC 1007 / CBS 513.65 / DSM 816 / NCTC 3887 / NRRL 1 / QM 1276 / 107).